A 558-amino-acid polypeptide reads, in one-letter code: Zinc finger protein piragua (558 aa).

Residues 15–94 (STCRLCHHNT…QEREQSLQEQ (80 aa)) enclose the ZAD domain. Positions 17, 20, 67, and 70 each coordinate Zn(2+). Over residues 132-177 (LAESSEEEFALGSDGEYENYDDDDEEEEEDYDEEDEEDGQNGEDVD) the composition is skewed to acidic residues. Positions 132 to 178 (LAESSEEEFALGSDGEYENYDDDDEEEEEDYDEEDEEDGQNGEDVDM) are disordered. C2H2-type zinc fingers lie at residues 208 to 231 (FLCQYCDLGFTLPAECQEHELAAH), 237 to 260 (YCCNFCNIKLVTRPALISHIKTLH), 266 to 288 (YVCAHCRKGFVRRSDLKKHTIVH), 294 to 316 (FTCNVCSKSFSRNTNLTKHMRIH), 322 to 344 (FVCQQCPRSFQTAVEMMRHTRSH), 350 to 372 (FQCGRCPYSFSRRDKLIAHQQVH), 414 to 436 (YHCDVCDRTFQRERDLQRHQALH), 441 to 464 (FACKTCNQGFNRREQLQRHELEAH), and 468 to 490 (FTCGICCISFLHQIELENHLKVH).

Functionally, may be involved in transcriptional regulation. The function of this protein is unclear. According to one report, it is required for development and viability since mutants display defects in several developmental morphogenetic processes including dorsal closure and head involution, and die by the first instar larval stage. It may also be involved in fwe-mediated cellular competition. However, according to another report, it is not required for development or viability since mutants have no visible phenotype and are fertile. This Drosophila melanogaster (Fruit fly) protein is Zinc finger protein piragua.